Here is a 357-residue protein sequence, read N- to C-terminus: GTPase Obg (357 aa).

Positions Met-1–Leu-159 constitute an Obg domain. The OBG-type G domain maps to Ala-160–Glu-343. Residues Gly-166–Ser-173, Phe-191–Tyr-195, Asp-213–Gly-216, Asn-293–Asp-296, and Ser-324–Val-326 each bind GTP. Positions 173 and 193 each coordinate Mg(2+).

The protein belongs to the TRAFAC class OBG-HflX-like GTPase superfamily. OBG GTPase family. Monomer. Requires Mg(2+) as cofactor.

The protein resides in the cytoplasm. An essential GTPase which binds GTP, GDP and possibly (p)ppGpp with moderate affinity, with high nucleotide exchange rates and a fairly low GTP hydrolysis rate. Plays a role in control of the cell cycle, stress response, ribosome biogenesis and in those bacteria that undergo differentiation, in morphogenesis control. The chain is GTPase Obg from Xylella fastidiosa (strain 9a5c).